The sequence spans 424 residues: E3 ubiquitin-protein ligase RNF26 (424 aa).

5 helical membrane passes run 24–44 (LNFLLVSSLLATLAWLLAFIY), 60–80 (GFLLSLLALVEAVVRFTFGGL), 157–177 (ISTQNFFSLVLALWDAVTGPL), 183–203 (VVAAFLAHISSSAVAMAILLW), and 224–244 (VVFHLTGLVLLACVLAVILIV). The RING-type zinc finger occupies 371 to 413 (CVICQDQSKTVLLLPCRHLCLCQACTEILMRHPVYHRNCPLCR).

As to quaternary structure, interacts with INCA1. Interacts with TMEM43, ENDOD1, TMEM33 and TMED1 to form a complex capable of modulating innate immune signaling through the cGAS-STING pathway. Interacts with UBE2J1; this interaction is important for SQSTM1 ubiquitination.

Its subcellular location is the endoplasmic reticulum membrane. It carries out the reaction S-ubiquitinyl-[E2 ubiquitin-conjugating enzyme]-L-cysteine + [acceptor protein]-L-lysine = [E2 ubiquitin-conjugating enzyme]-L-cysteine + N(6)-ubiquitinyl-[acceptor protein]-L-lysine.. It functions in the pathway protein modification; protein ubiquitination. E3 ubiquitin-protein ligase that plays a key role in endosome organization by retaining vesicles in the perinuclear cloud. Acts as a platform for perinuclear positioning of the endosomal system by mediating ubiquitination of SQSTM1 through interaction with the ubiquitin conjugating enzyme UBE2J1. Ubiquitinated SQSTM1 attracts specific vesicle-associated adapters, forming a molecular bridge that restrains cognate vesicles in the perinuclear region and organizes the endosomal pathway for efficient cargo transport. Also acts as a regulator of type I interferon production in response to viral infection by mediating the formation of 'Lys-11'-linked polyubiquitin chains on TMEM173/STING, leading to stabilize TMEM173/STING. Also required to limit type I interferon response by promoting autophagic degradation of IRF3. This is E3 ubiquitin-protein ligase RNF26 from Mus musculus (Mouse).